We begin with the raw amino-acid sequence, 402 residues long: Triose phosphate/phosphate translocator, non-green plastid, chloroplastic (402 aa).

The N-terminal 82 residues, 1–82, are a transit peptide targeting the chloroplast; the sequence is MQSSAVFSAS…SLDTNRFKTA (82 aa). Residues 83-98 lie on the Chloroplast intermembrane side of the membrane; that stretch reads ATAVPEEGEGSGKMTK. Residues 99-119 traverse the membrane as a helical segment; sequence VLELGLLFAMWYLFNIYFNIY. Positions 118–236 constitute an EamA domain; it reads IYNKQVLKAL…IVGGVALASV (119 aa). Topologically, residues 120–131 are lumenal; it reads NKQVLKALHAPM. The chain crosses the membrane as a helical span at residues 132–152; it reads TVTLVQFAVGSVLITFMWALN. Topologically, residues 153-209 are chloroplast intermembrane; that stretch reads LYKRPKISAAQLAAILPLAVVHTLGNLFTNMSLGKVSVSFTHTIKAMEPFFSVVLSA. A helical transmembrane segment spans residues 210–230; sequence MFLGEVPTPWVIGSIIPIVGG. The Lumenal portion of the chain corresponds to 231 to 278; sequence VALASVTEVSFNWAGFLSAMASNLTNQSRNVLSKKVMVKKDDSLDNIT. A helical membrane pass occupies residues 279–298; it reads LFSIITLMSLFLMAPVTFFS. Topologically, residues 299-374 are chloroplast intermembrane; that stretch reads EGIKFTPSYI…IFFKTPVSPV (76 aa). Residues 375-394 form a helical membrane-spanning segment; sequence NAFGTGIALAGVFLYSRVKR. Residues 395-402 are Lumenal-facing; it reads IKPKPKTA.

This sequence belongs to the TPT transporter family. TPT (TC 2.A.7.9) subfamily. In terms of assembly, homodimer.

The protein localises to the plastid. Its subcellular location is the chloroplast membrane. Its function is as follows. Mediates the export of fixed carbons from the chloroplasts into the cytosol in the form of triose phosphates. This chain is Triose phosphate/phosphate translocator, non-green plastid, chloroplastic (NGTPT), found in Brassica oleracea var. botrytis (Cauliflower).